Consider the following 210-residue polypeptide: DNA dC-&gt;dU-editing enzyme APOBEC-3H (210 aa).

Residues 4–126 (LTAKTFSLQF…PNYQEGLLLL (123 aa)) enclose the CMP/dCMP-type deaminase domain. Histidine 54 contacts Zn(2+). The active-site Proton donor is glutamate 56. Residues cysteine 85 and cysteine 88 each coordinate Zn(2+). The necessary and sufficient for localization to the cytoplasm stretch occupies residues 182–210 (SRSVDVLENGLRSLQLGPVTPSSSIRNSR).

Belongs to the cytidine and deoxycytidylate deaminase family. As to quaternary structure, homodimer. Requires Zn(2+) as cofactor.

It localises to the cytoplasm. The enzyme catalyses a 2'-deoxycytidine in single-stranded DNA + H2O + H(+) = a 2'-deoxyuridine in single-stranded DNA + NH4(+). Its activity is regulated as follows. Antiviral activity is neutralized by the simian immunodeficiency virus rhesus (SIV-mac) virion infectivity factor (VIF). Its function is as follows. DNA deaminase (cytidine deaminase) which acts as an inhibitor of retrovirus replication and retrotransposon mobility via deaminase-dependent and -independent mechanisms. Exhibits antiviral activity against vif-deficient HIV-1. After the penetration of retroviral nucleocapsids into target cells of infection and the initiation of reverse transcription, it can induce the conversion of cytosine to uracil in the minus-sense single-strand viral DNA, leading to G-to-A hypermutations in the subsequent plus-strand viral DNA. The resultant detrimental levels of mutations in the proviral genome, along with a deamination-independent mechanism that works prior to the proviral integration, together exert efficient antiretroviral effects in infected target cells. Selectively targets single-stranded DNA and does not deaminate double-stranded DNA or single- or double-stranded RNA. In Macaca mulatta (Rhesus macaque), this protein is DNA dC-&gt;dU-editing enzyme APOBEC-3H.